We begin with the raw amino-acid sequence, 270 residues long: MVKVAVTGALGRMGSGIIKTITETDGLDVVAAIDIPNHPKKGLDIGELTGLGKIGVLLSTSDELEDVLKESGAEVLVDFTAAAPCVNTAKTASKLGVNLVIGTTGFTPEQRAEMEKAISENKVAATISQNYAVGVNIFFKTLELLAQKLGDYDIEILEMHHKFKKDAPSGTALRAAEIIQNNLNRDSNLIYGREGITGERTKEEICIHALRGGDIVGDHTVIFTTEGERLELSHRVTSRQSLVSGAIRAIQFVADKKEGIYNTFDVLDLN.

NAD(+) contacts are provided by residues G8–M13, D34, G102–T104, and S128–Y131. The active-site Proton donor/acceptor is the H160. (S)-2,3,4,5-tetrahydrodipicolinate is bound at residue H161. Catalysis depends on K164, which acts as the Proton donor. G170 to T171 is a (S)-2,3,4,5-tetrahydrodipicolinate binding site.

Belongs to the DapB family.

It localises to the cytoplasm. It catalyses the reaction (S)-2,3,4,5-tetrahydrodipicolinate + NAD(+) + H2O = (2S,4S)-4-hydroxy-2,3,4,5-tetrahydrodipicolinate + NADH + H(+). It carries out the reaction (S)-2,3,4,5-tetrahydrodipicolinate + NADP(+) + H2O = (2S,4S)-4-hydroxy-2,3,4,5-tetrahydrodipicolinate + NADPH + H(+). It functions in the pathway amino-acid biosynthesis; L-lysine biosynthesis via DAP pathway; (S)-tetrahydrodipicolinate from L-aspartate: step 4/4. In terms of biological role, catalyzes the conversion of 4-hydroxy-tetrahydrodipicolinate (HTPA) to tetrahydrodipicolinate. The protein is 4-hydroxy-tetrahydrodipicolinate reductase of Methanococcus maripaludis (strain C6 / ATCC BAA-1332).